The chain runs to 275 residues: Large ribosomal subunit protein uL2 (275 aa).

Disordered regions lie at residues 24 to 48 and 224 to 264; these read LTTD…NAGD and VMNP…NKRT. Residues 31–42 are compositionally biased toward basic residues; that stretch reads KPLTKTKQRTGG.

This sequence belongs to the universal ribosomal protein uL2 family. In terms of assembly, part of the 50S ribosomal subunit. Forms a bridge to the 30S subunit in the 70S ribosome.

Its function is as follows. One of the primary rRNA binding proteins. Required for association of the 30S and 50S subunits to form the 70S ribosome, for tRNA binding and peptide bond formation. It has been suggested to have peptidyltransferase activity; this is somewhat controversial. Makes several contacts with the 16S rRNA in the 70S ribosome. This is Large ribosomal subunit protein uL2 from Koribacter versatilis (strain Ellin345).